The chain runs to 360 residues: Protein OSB4, chloroplastic (360 aa).

Residues 1–61 (MQFLGRSISK…AEKSSEEWPR (61 aa)) constitute a chloroplast transit peptide. Residues 28 to 64 (SQQFLSTSSTESSSRTRGGGGGNRAEKSSEEWPRPME) form a disordered region. The span at 33-43 (STSSTESSSRT) shows a compositional bias: low complexity. Over residues 51–61 (RAEKSSEEWPR) the composition is skewed to basic and acidic residues. In terms of domain architecture, SSB spans 71 to 188 (IANSIDLIGY…VMVRDLHYIE (118 aa)). PDF region stretches follow at residues 224 to 276 (WFDL…SELK) and 296 to 344 (WKDL…EKLP).

The protein localises to the plastid. It is found in the chloroplast. Its function is as follows. Binds single-stranded DNA. This Arabidopsis thaliana (Mouse-ear cress) protein is Protein OSB4, chloroplastic (OSB4).